The following is a 306-amino-acid chain: Oligopeptide transport system permease protein OppB (306 aa).

Topologically, residues 1-8 are cytoplasmic; it reads MLKFIFKR. The chain crosses the membrane as a helical span at residues 9 to 29; sequence LLEALPTLFILITFSFFLMRL. The Periplasmic segment spans residues 30 to 99; the sequence is APGSPFTSER…IASAFPVSIK (70 aa). Residues 94–293 form the ABC transmembrane type-1 domain; the sequence is FPVSIKLGMV…TLTILFNAIV (200 aa). Residues 100–120 traverse the membrane as a helical segment; it reads LGMVAFAFAVVLGVTAGTLAA. At 121–135 the chain is on the cytoplasmic side; the sequence is LNQNSRWDYILMSFS. The chain crosses the membrane as a helical span at residues 136 to 156; it reads MLGVIMPSFVFAPVLVLIFAI. Residues 157–169 are Periplasmic-facing; it reads YLGWLPAGGWNGG. Residues 170–190 form a helical membrane-spanning segment; the sequence is TAMYMILPVASLTIAYVAGIA. The Cytoplasmic segment spans residues 191-229; it reads RIMRGSMIEVLHSNFIRTAKAKGLSMSRIILKHALRPAL. The helical transmembrane segment at 230-250 threads the bilayer; the sequence is LPVITYLGPAFVGIITGSMVI. Over 251 to 279 the chain is Periplasmic; sequence ESVFGLPGMGLLFVNGALNRDYSLVLSLT. A helical transmembrane segment spans residues 280–300; it reads ILVGTLTILFNAIVDILYAII. Residues 301 to 306 lie on the Cytoplasmic side of the membrane; sequence DPKIRY.

It belongs to the binding-protein-dependent transport system permease family. OppBC subfamily. As to quaternary structure, the complex is composed of two ATP-binding proteins (OppD and OppF), two transmembrane proteins (OppB and OppC) and a solute-binding protein (OppA).

It is found in the cell inner membrane. Functionally, part of the ABC transporter complex OppABCDF involved in the uptake of oligopeptides. Probably responsible for the translocation of the substrate across the membrane. This Haemophilus influenzae (strain ATCC 51907 / DSM 11121 / KW20 / Rd) protein is Oligopeptide transport system permease protein OppB (oppB).